The chain runs to 153 residues: Endoribonuclease YbeY (153 aa).

His114, His118, and His124 together coordinate Zn(2+).

The protein belongs to the endoribonuclease YbeY family. It depends on Zn(2+) as a cofactor.

It is found in the cytoplasm. Single strand-specific metallo-endoribonuclease involved in late-stage 70S ribosome quality control and in maturation of the 3' terminus of the 16S rRNA. This chain is Endoribonuclease YbeY, found in Shewanella oneidensis (strain ATCC 700550 / JCM 31522 / CIP 106686 / LMG 19005 / NCIMB 14063 / MR-1).